The primary structure comprises 316 residues: Phosphate acyltransferase (316 aa).

The protein belongs to the PlsX family. In terms of assembly, homodimer. Probably interacts with PlsY.

It is found in the cytoplasm. The enzyme catalyses a fatty acyl-[ACP] + phosphate = an acyl phosphate + holo-[ACP]. Its pathway is lipid metabolism; phospholipid metabolism. In terms of biological role, catalyzes the reversible formation of acyl-phosphate (acyl-PO(4)) from acyl-[acyl-carrier-protein] (acyl-ACP). This enzyme utilizes acyl-ACP as fatty acyl donor, but not acyl-CoA. The chain is Phosphate acyltransferase from Chlamydia abortus (strain DSM 27085 / S26/3) (Chlamydophila abortus).